The primary structure comprises 349 residues: MEALLEPVVQLFGPAWPAVWTLTKIVAIIAPLMLCVAYLTLAERKVIGYMQVRIGPNRVGPKGLLQPIADGMKLLFKEIIVPTGASKGLFILGPILAIAPSLAAWAVVPFGEGMVLADVNAGLLFLLAITSVEVYGVIIAGWASNSKYPFLGSMRAAAQMVSYEVAMGFALICVLLISASLNLTDIVRSQGQGQFHEMGLSFLSWNWIPLFPMFIVFLISGIAETNRAPFDVVEGESEVVAGHMVEYSGMAFALFFLAEYANMILVSILTSVLFVGGWLSPVSFLPDGFFWLALKTAFFLFVFLWARATFPRFRYDHIMRLGWKVFIPITLVWVIVVAVWMMSPLSIWK.

8 helical membrane passes run 19 to 39, 88 to 108, 123 to 143, 161 to 181, 202 to 222, 249 to 269, 284 to 304, and 325 to 345; these read VWTL…VAYL, GLFI…WAVV, LLFL…AGWA, VSYE…SASL, FLSW…ISGI, GMAF…VSIL, FLPD…FVFL, and VFIP…MSPL.

It belongs to the complex I subunit 1 family. In terms of assembly, NDH-1 is composed of 14 different subunits. Subunits NuoA, H, J, K, L, M, N constitute the membrane sector of the complex.

It localises to the cell inner membrane. The catalysed reaction is a quinone + NADH + 5 H(+)(in) = a quinol + NAD(+) + 4 H(+)(out). Functionally, NDH-1 shuttles electrons from NADH, via FMN and iron-sulfur (Fe-S) centers, to quinones in the respiratory chain. The immediate electron acceptor for the enzyme in this species is believed to be ubiquinone. Couples the redox reaction to proton translocation (for every two electrons transferred, four hydrogen ions are translocated across the cytoplasmic membrane), and thus conserves the redox energy in a proton gradient. This subunit may bind ubiquinone. This chain is NADH-quinone oxidoreductase subunit H, found in Aromatoleum aromaticum (strain DSM 19018 / LMG 30748 / EbN1) (Azoarcus sp. (strain EbN1)).